A 508-amino-acid polypeptide reads, in one-letter code: MKLAYWMYAGPAHIGTLRIASSFKNVHAIMHAPLGDDYFNVMRSMLERERDFTPVTASIVDRNVLARGSQEKVVDNIVRKDGEENPDLIVLTPTCTSSILQEDLANFVDRAQMDAKGDVMLADVNHYRYNELQAADRTLHQIVKFYLEKAQKKGELPQRKTEKPSVNIIGISTLGFHNQHDCTELKRLMADLGIEVNEVIPEGASVHNLKNLPKAWFNLVPYRELGLATAGYLEEQFGMSYVDITPMGVVETARCIRKIQQLINAQGAEVDYEEFIKEQTLYVSQAAWFSRSIDCQNLTGKKAVVFGDNTHAAAITKILAREMGIHVVLAGTYCKYDADWFREQVSEYCDEVLISDDNAAIGDAIARLEPSAIFGTQMERHVGKRLDIPCGVIASPIHIQNFPIGYKPFCGYEGTNQITDLIYNSFTLGMEDHLLEIFGGHDTKEVITKGISADSDLNWNKEAQAELNKVPGFVRGKVKRNTEKFARERGFSVITLEVMYAAKEAVGA.

Aspartate 36 lines the [4Fe-4S] cluster pocket. The Proton donor role is filled by aspartate 294. A substrate-binding site is contributed by 429–430; that stretch reads GM.

Belongs to the ChlB/BchB/BchZ family. Protochlorophyllide reductase is composed of three subunits; ChlL, ChlN and ChlB. Forms a heterotetramer of two ChlB and two ChlN subunits. The cofactor is [4Fe-4S] cluster.

It carries out the reaction chlorophyllide a + oxidized 2[4Fe-4S]-[ferredoxin] + 2 ADP + 2 phosphate = protochlorophyllide a + reduced 2[4Fe-4S]-[ferredoxin] + 2 ATP + 2 H2O. The protein operates within porphyrin-containing compound metabolism; chlorophyll biosynthesis (light-independent). Component of the dark-operative protochlorophyllide reductase (DPOR) that uses Mg-ATP and reduced ferredoxin to reduce ring D of protochlorophyllide (Pchlide) to form chlorophyllide a (Chlide). This reaction is light-independent. The NB-protein (ChlN-ChlB) is the catalytic component of the complex. This is Light-independent protochlorophyllide reductase subunit B from Rippkaea orientalis (strain PCC 8801 / RF-1) (Cyanothece sp. (strain PCC 8801)).